Consider the following 174-residue polypeptide: Shikimate kinase 2 (174 aa).

Position 12–17 (12–17) interacts with ATP; it reads GCGKTT. Threonine 16 and aspartate 32 together coordinate Mg(2+). Residues aspartate 34, arginine 58, and glycine 79 each coordinate substrate. Residues 112-126 are LID domain; sequence QAAPEEDLRPTLTGK. ATP is bound at residue arginine 120. Residue arginine 139 coordinates substrate.

Belongs to the shikimate kinase family. AroL subfamily. As to quaternary structure, monomer. It depends on Mg(2+) as a cofactor.

The protein resides in the cytoplasm. It catalyses the reaction shikimate + ATP = 3-phosphoshikimate + ADP + H(+). It participates in metabolic intermediate biosynthesis; chorismate biosynthesis; chorismate from D-erythrose 4-phosphate and phosphoenolpyruvate: step 5/7. Functionally, catalyzes the specific phosphorylation of the 3-hydroxyl group of shikimic acid using ATP as a cosubstrate. The sequence is that of Shikimate kinase 2 from Escherichia coli O81 (strain ED1a).